Reading from the N-terminus, the 21-residue chain is Peptide PGLa-B2 (21 aa).

The residue at position 21 (L21) is a Leucine amide.

Expressed by the skin glands.

The protein localises to the secreted. Its function is as follows. Has antimicrobial activity against Gram-negative bacterium E.coli ATCC 25922 (MIC=25 uM), Gram-positive bacterium S.auerus ATCC 25923 (MIC=50 uM) and against fungus C.albicans ATCC 90028 (MIC=25 uM). Has some hemolytic activity against human erythrocytes at high concentration. The polypeptide is Peptide PGLa-B2 (Xenopus borealis (Kenyan clawed frog)).